Here is a 409-residue protein sequence, read N- to C-terminus: Argininosuccinate synthase (409 aa).

ATP contacts are provided by residues 11–19 (AYSGGLDTS) and Ala-38. Residues Tyr-91 and Ser-96 each contribute to the L-citrulline site. Gly-121 contacts ATP. The L-aspartate site is built by Thr-123, Asn-127, and Asp-128. Residue Asn-127 participates in L-citrulline binding. L-citrulline contacts are provided by Arg-131, Ser-182, Ser-191, Glu-267, and Tyr-279.

The protein belongs to the argininosuccinate synthase family. Type 1 subfamily. In terms of assembly, homotetramer.

It is found in the cytoplasm. The catalysed reaction is L-citrulline + L-aspartate + ATP = 2-(N(omega)-L-arginino)succinate + AMP + diphosphate + H(+). The protein operates within amino-acid biosynthesis; L-arginine biosynthesis; L-arginine from L-ornithine and carbamoyl phosphate: step 2/3. The polypeptide is Argininosuccinate synthase (Nitrobacter hamburgensis (strain DSM 10229 / NCIMB 13809 / X14)).